The sequence spans 380 residues: Phthiodiolone/phenolphthiodiolone dimycocerosates ketoreductase (380 aa).

This sequence belongs to the mer family. Phthiodiolone/phenolphthiodiolone dimycocerosates ketoreductase subfamily.

Its function is as follows. Catalyzes the reduction of the keto moiety of phthiodiolone dimycocerosates (DIM B) and glycosylated phenolphthiodiolone dimycocerosates to form the intermediate compounds phthiotriol and glycosylated phenolphthiotriol dimycocerosates during phthiocerol dimycocerosates (DIM A) and glycosylated phenolphthiocerol dimycocerosates (PGL) biosynthesis. The sequence is that of Phthiodiolone/phenolphthiodiolone dimycocerosates ketoreductase from Mycobacterium sp. (strain JLS).